The sequence spans 101 residues: Urease subunit beta (101 aa).

The protein belongs to the urease beta subunit family. As to quaternary structure, heterotrimer of UreA (gamma), UreB (beta) and UreC (alpha) subunits. Three heterotrimers associate to form the active enzyme.

The protein localises to the cytoplasm. The enzyme catalyses urea + 2 H2O + H(+) = hydrogencarbonate + 2 NH4(+). It participates in nitrogen metabolism; urea degradation; CO(2) and NH(3) from urea (urease route): step 1/1. The protein is Urease subunit beta of Bradyrhizobium sp. (strain ORS 278).